We begin with the raw amino-acid sequence, 1050 residues long: Ankyrin repeat domain-containing protein 27 (1050 aa).

The interval 1-372 (MALYDEDLLK…RQGSLSAKPP (372 aa)) is sufficient for GEF activity towards RAB21. The 139-residue stretch at 233–371 (ASEDAAFNKI…IRQGSLSAKP (139 aa)) folds into the VPS9 domain. 6 ANK repeats span residues 396 to 426 (SPTD…DKDA), 462 to 491 (RGHT…VVNA), 495 to 524 (HGAT…SAEV), 528 to 560 (NGNT…RLDI), 564 to 593 (KGDT…SPEI), and 597 to 627 (LKET…RQKS). Residues 396 to 460 (SPTDCLFKHI…PSVVTPFSRD (65 aa)) form a sufficient for interaction with VPS29 region. The segment at 451-600 (PSVVTPFSRD…PEIQNRLKET (150 aa)) is interaction with RAB38. The segment at 451 to 730 (PSVVTPFSRD…APAQKRLAKV (280 aa)) is interaction with RAB32. Residues 630 to 665 (APVQSLQRSVDSISQESSTSSFSSMSAGSRQEETKK) are disordered. Over residues 638 to 658 (SVDSISQESSTSSFSSMSAGS) the composition is skewed to low complexity. The segment at 658–707 (SRQEETKKDYREVEKLLRAVADGDLEMVRYLLEWTEEDLEDAEDTVSAVD) is required for interaction with VAMP7. 5 ANK repeats span residues 668 to 698 (REVE…DLED), 743 to 772 (DGSS…NAGA), 776 to 805 (DQAV…KPNK), 809 to 838 (SGNT…AINT), and 842 to 871 (KGNT…SVQV). Residues 692–746 (TEEDLEDAEDTVSAVDPEFCHPLCQCPKCAPAQKRLAKVPASGLGVNVTSQDGSS) are sufficient for interaction with VPS29. Residues S962 and S970 each carry the phosphoserine modification. Positions 987-1050 (PAQSGSHAAE…TPQEVSASRS (64 aa)) are disordered. Positions 994 to 1007 (AAEKGNSDWPERPR) are enriched in basic and acidic residues. At T1023 the chain carries Phosphothreonine. Polar residues predominate over residues 1040-1050 (STPQEVSASRS).

Interacts with RAB21 (GDP-bound form), VPS29, KIF5A, KIF5C, GOLGA4. Interacts with RAB32 (GTP-bound form), RAB38 (GTP-bound form), VAMP7. Interacts with low affinity with RAB5. ANKRD27:RAB32 heterodimers can homodimerize to form tetramers. Can interact with RAB38 or RAB32, VPS29 and VAMP7 simultaneously. A decreased interaction with RAB32 seen in the presence of SGSM2.

The protein localises to the early endosome. It is found in the late endosome. Its subcellular location is the cytoplasmic vesicle membrane. The protein resides in the lysosome. It localises to the cell membrane. The protein localises to the melanosome. Functionally, may be a guanine exchange factor (GEF) for Rab21, Rab32 and Rab38 and regulate endosome dynamics. May regulate the participation of VAMP7 in membrane fusion events; in vitro inhibits VAMP7-mediated SNARE complex formation by trapping VAMP7 in a closed, fusogenically inactive conformation. Involved in peripheral melanosomal distribution of TYRP1 in melanocytes; the function, which probably is implicating vesicle-trafficking, includes cooperation with Rab32, Rab38 and VAMP7. Involved in the regulation of neurite growth; the function seems to require its GEF activity, probably towards Rab21, and VAMP7 but not Rab32/38. Proposed to be involved in Golgi sorting of VAMP7 and transport of VAMP7 vesicles to the cell surface; the function seems to implicate kinesin heavy chain isoform 5 proteins, GOLGA4, RAB21 and MACF1. Required for the colocalization of VAMP7 and Rab21, probably on TGN sites. Involved in GLUT1 endosome-to-plasma membrane trafficking; the function is dependent of association with VPS29. Regulates the proper trafficking of melanogenic enzymes TYR, TYRP1 and DCT/TYRP2 to melanosomes in melanocytes. In Pongo abelii (Sumatran orangutan), this protein is Ankyrin repeat domain-containing protein 27 (ANKRD27).